We begin with the raw amino-acid sequence, 61 residues long: Small ribosomal subunit protein uS14 (61 aa).

The Zn(2+) site is built by Cys24, Cys27, Cys40, and Cys43.

It belongs to the universal ribosomal protein uS14 family. Zinc-binding uS14 subfamily. Part of the 30S ribosomal subunit. Contacts proteins S3 and S10. Zn(2+) is required as a cofactor.

Functionally, binds 16S rRNA, required for the assembly of 30S particles and may also be responsible for determining the conformation of the 16S rRNA at the A site. The protein is Small ribosomal subunit protein uS14 of Syntrophus aciditrophicus (strain SB).